The chain runs to 69 residues: Light-harvesting protein B-1015 beta chain (69 aa).

At 2–21 the chain is on the cytoplasmic side; the sequence is ADLKPSLTGLTEEEAKEFHG. The a bacteriochlorophyll site is built by His-20 and His-38. A helical membrane pass occupies residues 22–44; it reads IFVTSTVLYLATAVIVHYLVWTA. At 45–56 the chain is on the periplasmic side; the sequence is RPWIAPIPKGWV. The propeptide occupies 57–69; sequence NLEGVQSALSYLV.

Belongs to the antenna complex beta subunit family. In terms of assembly, the core complex is formed by different alpha and beta chains, binding bacteriochlorophyll molecules, and arranged most probably in tetrameric structures disposed around the reaction center. The non-pigmented gamma chains may constitute additional components.

Its subcellular location is the cell inner membrane. Its function is as follows. Antenna complexes are light-harvesting systems, which transfer the excitation energy to the reaction centers. The sequence is that of Light-harvesting protein B-1015 beta chain (pufB) from Blastochloris viridis (Rhodopseudomonas viridis).